Here is a 257-residue protein sequence, read N- to C-terminus: Zinc import ATP-binding protein ZnuC (257 aa).

The 216-residue stretch at 6–221 folds into the ABC transporter domain; that stretch reads IRLDQVGVTF…PAFVELFGKT (216 aa). Position 38 to 45 (38 to 45) interacts with ATP; sequence GPNGAGKT.

Belongs to the ABC transporter superfamily. Zinc importer (TC 3.A.1.15.5) family. The complex is composed of two ATP-binding proteins (ZnuC), two transmembrane proteins (ZnuB) and a solute-binding protein (ZnuA).

It is found in the cell inner membrane. The catalysed reaction is Zn(2+)(out) + ATP(in) + H2O(in) = Zn(2+)(in) + ADP(in) + phosphate(in) + H(+)(in). In terms of biological role, part of the ABC transporter complex ZnuABC involved in zinc import. Responsible for energy coupling to the transport system. The sequence is that of Zinc import ATP-binding protein ZnuC from Pseudomonas putida (strain ATCC 47054 / DSM 6125 / CFBP 8728 / NCIMB 11950 / KT2440).